The following is a 434-amino-acid chain: Enolase (434 aa).

Residue glutamine 165 coordinates (2R)-2-phosphoglycerate. Catalysis depends on glutamate 207, which acts as the Proton donor. Positions 244, 291, and 318 each coordinate Mg(2+). Lysine 343, arginine 372, serine 373, and lysine 394 together coordinate (2R)-2-phosphoglycerate. Residue lysine 343 is the Proton acceptor of the active site.

The protein belongs to the enolase family. Requires Mg(2+) as cofactor.

It is found in the cytoplasm. The protein localises to the secreted. Its subcellular location is the cell surface. The enzyme catalyses (2R)-2-phosphoglycerate = phosphoenolpyruvate + H2O. The protein operates within carbohydrate degradation; glycolysis; pyruvate from D-glyceraldehyde 3-phosphate: step 4/5. Functionally, catalyzes the reversible conversion of 2-phosphoglycerate (2-PG) into phosphoenolpyruvate (PEP). It is essential for the degradation of carbohydrates via glycolysis. The sequence is that of Enolase from Macrococcus caseolyticus (strain JCSC5402) (Macrococcoides caseolyticum).